A 394-amino-acid polypeptide reads, in one-letter code: Ceramide glucosyltransferase (394 aa).

The Lumenal segment spans residues 1 to 10; it reads MAVLDLALQG. A helical membrane pass occupies residues 11-32; that stretch reads LAIFGCVLFFVLWFMHFLSIVY. Over 33–195 the chain is Cytoplasmic; it reads TRLHLNKKVS…QVYFGTSHPR (163 aa). A short sequence motif (D1) is located at residue aspartate 92. Position 144 (aspartate 144) is a short sequence motif, D2. A helical membrane pass occupies residues 196–215; the sequence is SYISANVTGFKCVTGMSCLM. Residues 216-287 lie on the Lumenal side of the membrane; sequence RKEVLDQAGG…KLRINMLPAT (72 aa). Residue aspartate 236 is a short sequence motif, D3. The Proton acceptor role is filled by aspartate 236. The (Q/R)XXRW motif lies at 272–276; the sequence is RMIRW. Residues 288–304 traverse the membrane as a helical segment; that stretch reads IICEPISECFVASLIIG. Over 305–309 the chain is Cytoplasmic; that stretch reads WAAHH. Residues 310–328 form a helical membrane-spanning segment; it reads IFRWDIMVFFMCHCLAWFI. Residues 329–348 are Lumenal-facing; it reads FDYIQLRGVQGGPLNFSKLD. The chain crosses the membrane as a helical span at residues 349-369; the sequence is YAVAWFIRESMTIYIFLSALW. The Cytoplasmic segment spans residues 370–394; it reads DPTISWRTGRYRLRCGGTAEEILDV.

The protein belongs to the glycosyltransferase 2 family.

Its subcellular location is the golgi apparatus membrane. It catalyses the reaction an N-acylsphing-4-enine + UDP-alpha-D-glucose = a beta-D-glucosyl-(1&lt;-&gt;1')-N-acylsphing-4-enine + UDP + H(+). The catalysed reaction is UDP-alpha-D-xylose + an N-acylsphing-4-enine = a beta-D-xylosyl-(1&lt;-&gt;1')-N-acylsphing-4-enine + UDP + H(+). The enzyme catalyses N-(9Z-octadecenoyl)-sphing-4-enine + UDP-alpha-D-xylose = beta-D-xylosyl-(1&lt;-&gt;1')-N-(9Z-octadecenoyl)-sphing-4-enine + UDP + H(+). Its pathway is lipid metabolism; sphingolipid metabolism. Its function is as follows. Participates in the initial step of the glucosylceramide-based glycosphingolipid/GSL synthetic pathway at the cytosolic surface of the Golgi. Catalyzes the transfer of glucose from UDP-glucose to ceramide to produce glucosylceramide/GlcCer (such as beta-D-glucosyl-(1&lt;-&gt;1')-N-acylsphing-4-enine). Glucosylceramide is the core component of glycosphingolipids/GSLs, amphipathic molecules consisting of a ceramide lipid moiety embedded in the outer leaflet of the membrane, linked to one of hundreds of different externally oriented oligosaccharide structures. Glycosphingolipids are essential components of membrane microdomains that mediate membrane trafficking and signal transduction. They are implicated in many fundamental cellular processes, including growth, differentiation, migration, morphogenesis, cell-to-cell and cell-to-matrix interactions. Catalyzes the synthesis of xylosylceramide/XylCer (such as beta-D-xylosyl-(1&lt;-&gt;1')-N-acylsphing-4-enine) using UDP-Xyl as xylose donor. This Xenopus tropicalis (Western clawed frog) protein is Ceramide glucosyltransferase (ugcg).